The sequence spans 626 residues: Interferon-induced GTP-binding protein MxC (626 aa).

Residues 40-313 (DLNLPAIAVI…LVEHIAKNVP (274 aa)) enclose the Dynamin-type G domain. The tract at residues 50–57 (GDQSSGKS) is G1 motif. 50–57 (GDQSSGKS) lines the GTP pocket. Positions 75 to 77 (VTR) are G2 motif. The interval 151 to 154 (DLPG) is G3 motif. GTP-binding positions include 151–155 (DLPGI) and 220–223 (TKPD). The G4 motif stretch occupies residues 220–223 (TKPD). The G5 motif stretch occupies residues 252–255 (KCRG). The region spanning 534–624 (LRETAFHLTS…ALPKVVHSAN (91 aa)) is the GED domain.

The protein belongs to the TRAFAC class dynamin-like GTPase superfamily. Dynamin/Fzo/YdjA family.

The protein resides in the cytoplasm. This chain is Interferon-induced GTP-binding protein MxC (mxc), found in Danio rerio (Zebrafish).